A 62-amino-acid chain; its full sequence is Cytotoxin 11 (62 aa).

4 disulfide bridges follow: Cys3/Cys22, Cys15/Cys40, Cys44/Cys55, and Cys56/Cys61.

This sequence belongs to the three-finger toxin family. Short-chain subfamily. Orphan group XV sub-subfamily. In terms of tissue distribution, expressed by the venom gland.

The protein localises to the secreted. Its subcellular location is the target cell membrane. Has low cytotoxic activity. The polypeptide is Cytotoxin 11 (Naja annulifera (Banded Egyptian cobra)).